A 146-amino-acid polypeptide reads, in one-letter code: Acireductone dioxygenase (146 aa).

Positions 71, 73, 77, and 116 each coordinate Fe(2+). Residues H71, H73, E77, and H116 each coordinate Ni(2+).

This sequence belongs to the acireductone dioxygenase (ARD) family. Fe(2+) serves as cofactor. Requires Ni(2+) as cofactor.

It localises to the cytoplasm. Its subcellular location is the nucleus. It catalyses the reaction 1,2-dihydroxy-5-(methylsulfanyl)pent-1-en-3-one + O2 = 4-methylsulfanyl-2-oxobutanoate + formate + 2 H(+). The enzyme catalyses 1,2-dihydroxy-5-(methylsulfanyl)pent-1-en-3-one + O2 = 3-(methylsulfanyl)propanoate + CO + formate + 2 H(+). It participates in amino-acid biosynthesis; L-methionine biosynthesis via salvage pathway; L-methionine from S-methyl-5-thio-alpha-D-ribose 1-phosphate: step 5/6. Functionally, catalyzes 2 different reactions between oxygen and the acireductone 1,2-dihydroxy-3-keto-5-methylthiopentene (DHK-MTPene) depending upon the metal bound in the active site. Fe-containing acireductone dioxygenase (Fe-ARD) produces formate and 2-keto-4-methylthiobutyrate (KMTB), the alpha-ketoacid precursor of methionine in the methionine recycle pathway. Ni-containing acireductone dioxygenase (Ni-ARD) produces methylthiopropionate, carbon monoxide and formate, and does not lie on the methionine recycle pathway. In Heterostelium pallidum (strain ATCC 26659 / Pp 5 / PN500) (Cellular slime mold), this protein is Acireductone dioxygenase.